Here is a 161-residue protein sequence, read N- to C-terminus: Dihydrofolate reductase (161 aa).

In terms of domain architecture, DHFR spans 2–161; that stretch reads NISLIAAISK…YNYSFEILSR (160 aa). 6 to 8 is a binding site for substrate; it reads IAA. NADP(+) is bound by residues 7–8 and 15–20; these read AA and IGYKNK. D28 provides a ligand contact to substrate. 44-47 contributes to the NADP(+) binding site; that stretch reads GRLT. A substrate-binding site is contributed by R59. NADP(+) is bound by residues 64–66 and 96–101; these read ISS and IGGAKI. Position 115 (T115) interacts with substrate.

This sequence belongs to the dihydrofolate reductase family.

The catalysed reaction is (6S)-5,6,7,8-tetrahydrofolate + NADP(+) = 7,8-dihydrofolate + NADPH + H(+). It participates in cofactor biosynthesis; tetrahydrofolate biosynthesis; 5,6,7,8-tetrahydrofolate from 7,8-dihydrofolate: step 1/1. Functionally, key enzyme in folate metabolism. Catalyzes an essential reaction for de novo glycine and purine synthesis, and for DNA precursor synthesis. The chain is Dihydrofolate reductase (folA) from Buchnera aphidicola subsp. Acyrthosiphon pisum (strain APS) (Acyrthosiphon pisum symbiotic bacterium).